A 142-amino-acid chain; its full sequence is Taurine up-regulated 1 protein (142 aa).

The first 40 residues, 1 to 40 (MARPPPLPGLVGRRSGRAVDRAIGWRLFLLLWHPALGAQA), serve as a signal peptide directing secretion. The Extracellular segment spans residues 41 to 123 (RPPRRAPGGR…ARTQLEGQEG (83 aa)). The helical transmembrane segment at 124–140 (AGGWLVVGFLLCLFLLM) threads the bilayer. Topologically, residues 141–142 (PP) are cytoplasmic.

In terms of tissue distribution, widely expressed in the adult with highest levels in placenta and testis. Also expressed in a number of embryonic tissues at multiple embryonic stages.

It is found in the nucleus membrane. The protein resides in the mitochondrion membrane. The protein localises to the cytoplasm. This Mus musculus (Mouse) protein is Taurine up-regulated 1 protein.